Here is a 66-residue protein sequence, read N- to C-terminus: Large ribosomal subunit protein bL31 (66 aa).

4 residues coordinate Zn(2+): C16, C18, C36, and C39.

The protein belongs to the bacterial ribosomal protein bL31 family. Type A subfamily. Part of the 50S ribosomal subunit. Zn(2+) serves as cofactor.

Binds the 23S rRNA. The sequence is that of Large ribosomal subunit protein bL31 from Pelobacter propionicus (strain DSM 2379 / NBRC 103807 / OttBd1).